Consider the following 204-residue polypeptide: HTH-type transcriptional repressor KstR (204 aa).

The 61-residue stretch at 18-78 (RERRKRILDA…SALGREFERI (61 aa)) folds into the HTH tetR-type domain. Residues 41-60 (QMRAVAERADVAVGTLYRYF) constitute a DNA-binding region (H-T-H motif).

Homodimer.

In terms of biological role, controls the expression of genes used for utilizing diverse lipids as energy sources. The sequence is that of HTH-type transcriptional repressor KstR (kstR) from Mycolicibacterium smegmatis (strain ATCC 700084 / mc(2)155) (Mycobacterium smegmatis).